Consider the following 715-residue polypeptide: Probable serine/threonine-protein kinase MARK-B (715 aa).

Residues 24-37 (SCSSNSTTSSSSNS) show a composition bias toward low complexity. The segment at 24–65 (SCSSNSTTSSSSNSPKQNKVSPGYRNKPQQQQHKKGHKMGNY) is disordered. The 256-residue stretch at 65-320 (YLLGKTIGSG…LDEIKTHVWV (256 aa)) folds into the Protein kinase domain. Residues 71-79 (IGSGTSSKV) and lysine 94 each bind ATP. The Proton acceptor role is filled by aspartate 187. The segment covering 335–344 (KVSDRLEKEQ) has biased composition (basic and acidic residues). 2 disordered regions span residues 335 to 399 (KVSD…IPQN) and 446 to 530 (CSAP…HHST). Residues 345–368 (QQQTPQHQQTQQQLQPQSQLQQHS) are compositionally biased toward low complexity. A compositionally biased stretch (polar residues) spans 381–399 (IGSNRPLNQSSPNLTIPQN). Low complexity-rich tracts occupy residues 451 to 478 (SPHS…LSVS) and 487 to 513 (SSNP…INTS). Over residues 517–527 (QYHHHHHHQNH) the composition is skewed to basic residues. The 50-residue stretch at 666-715 (LCPRNETINFEIEVCKVNGMDMYGIKFKRLSGDAWSYSSSCIKIVESLKL) folds into the KA1 domain.

This sequence belongs to the protein kinase superfamily. CAMK Ser/Thr protein kinase family. SNF1 subfamily.

The catalysed reaction is L-seryl-[protein] + ATP = O-phospho-L-seryl-[protein] + ADP + H(+). It catalyses the reaction L-threonyl-[protein] + ATP = O-phospho-L-threonyl-[protein] + ADP + H(+). The sequence is that of Probable serine/threonine-protein kinase MARK-B (mrkB) from Dictyostelium discoideum (Social amoeba).